The primary structure comprises 112 residues: MSGVWVFNNGVIRLVENPNQSGGVSTQSHGRRNVLVYLPTGEAVSSYSSLEQILRSLGWERYFSGDSDLIQYHKRSSIDLISLPRDFSKFNSVYMYDIVVKNPNSFHVRDFN.

It belongs to the FPF1 family. As to expression, expressed in leaves and in some parts of the flowers, mainly in the sepals.

Its function is as follows. Modulates the competence to flowering of apical meristems. The sequence is that of Flowering-promoting factor 1-like protein 2 (FLP2) from Arabidopsis thaliana (Mouse-ear cress).